The primary structure comprises 556 residues: MKSDNVRIGLERAPHRSLFKAMGYTDEELNRPLIGVANPMNAVIPGHVHLNNIAEAVQKGIYLAGGTPAIFGGIGVCDGIAMNHAGMKYSLASREIIADSVEIMATAHAFDGLVLICNCDKIVPGMLMAAARIDIPTVIISGGPMLAGSHPNVKNGEKIDLITVFEGVGAVKSGKMTEEELSLMEDEACPTCGSCAGMFTANSMNCLTEVIGMGLPGNGTIPAVMASRIRLAKQAGMAVMDMVEKNITPSQIMTPEAFANALAVDMALGCSTNTALHLPAIAHEAGVEFNLKQINEISARIPHLCQLSPGGYHRIEDLNRAGGIQAVLSELIKHNLINTDCITVTGKSVGENASKARILDPEVIRSVETPYHKEGGLAVLFGNVAPEGCVVKQSAVVDKMLVHEGPARVFDSEDEASKAIMDGLIKKGDVVVVRYEGPKGGPGMREMLTPTSVIAGMGLDADVALITDGRFSGGTRGAAIGHVSPEAMSGGPIAAVREGDIIKINIPEKTIALDVPEEEIKARMAGWTPPEPKITKGYMARYARNVESASKGAVVL.

Residue Asp78 participates in Mg(2+) binding. Residue Cys119 participates in [2Fe-2S] cluster binding. Residues Asp120 and Lys121 each contribute to the Mg(2+) site. N6-carboxylysine is present on Lys121. A [2Fe-2S] cluster-binding site is contributed by Cys195. Glu446 serves as a coordination point for Mg(2+). Ser472 functions as the Proton acceptor in the catalytic mechanism.

This sequence belongs to the IlvD/Edd family. Homodimer. Requires [2Fe-2S] cluster as cofactor. Mg(2+) is required as a cofactor.

The catalysed reaction is (2R)-2,3-dihydroxy-3-methylbutanoate = 3-methyl-2-oxobutanoate + H2O. It carries out the reaction (2R,3R)-2,3-dihydroxy-3-methylpentanoate = (S)-3-methyl-2-oxopentanoate + H2O. The protein operates within amino-acid biosynthesis; L-isoleucine biosynthesis; L-isoleucine from 2-oxobutanoate: step 3/4. It participates in amino-acid biosynthesis; L-valine biosynthesis; L-valine from pyruvate: step 3/4. Its function is as follows. Functions in the biosynthesis of branched-chain amino acids. Catalyzes the dehydration of (2R,3R)-2,3-dihydroxy-3-methylpentanoate (2,3-dihydroxy-3-methylvalerate) into 2-oxo-3-methylpentanoate (2-oxo-3-methylvalerate) and of (2R)-2,3-dihydroxy-3-methylbutanoate (2,3-dihydroxyisovalerate) into 2-oxo-3-methylbutanoate (2-oxoisovalerate), the penultimate precursor to L-isoleucine and L-valine, respectively. This chain is Dihydroxy-acid dehydratase, found in Desulfatibacillum aliphaticivorans.